Reading from the N-terminus, the 345-residue chain is Membrane progestin receptor gamma-A (345 aa).

Residues 1-52 (MLNLIKLPQVFTINQVPKVFHEDGIISGYRHPCSSAKDCVLSLFQLTNETLN) lie on the Cytoplasmic side of the membrane. Residues 53–73 (IWTHFLPTWFFLWKLLTVVLV) form a helical membrane-spanning segment. Residues 74–80 (LEDWRDP) lie on the Extracellular side of the membrane. The chain crosses the membrane as a helical span at residues 81 to 101 (FIWPFLVFLLSCCVYPLASSC). Over 102 to 114 (AHTFSTMSERARH) the chain is Cytoplasmic. Residues 115–135 (ICFFFDYGALSFYSLGSAIIY) form a helical membrane-spanning segment. The Extracellular segment spans residues 136–148 (SSYSFPDKWVNGT). Residues 149–169 (FHLNYVSIAVVNSIISTALAC) form a helical membrane-spanning segment. The Cytoplasmic segment spans residues 170–201 (YSRLGLPFLEYNCHSIKRPSGKLDQKLCKCLR). The chain crosses the membrane as a helical span at residues 202 to 222 (IIAFVYPYLFDNIPLFYRIFV). Topologically, residues 223-272 (CAGEGCTVNEANTVHYQHTSLAFFTGFLFATHLPERLAPGSFDYIGHSHQ) are extracellular. The chain crosses the membrane as a helical span at residues 273–293 (LFHVFAIIGTYFQMTAIELDM). Topologically, residues 294-314 (AARKQWLHAHLPPVTFLNTVG) are cytoplasmic. A helical membrane pass occupies residues 315 to 335 (AAFFSVVSGLCIVYVFSLSLF). Residues 336–345 (STRGVKNKSF) are Extracellular-facing.

The protein belongs to the ADIPOR family.

The protein resides in the membrane. Its function is as follows. Steroid membrane receptor. Binds progesterone. May be involved in oocyte maturation. The sequence is that of Membrane progestin receptor gamma-A (paqr5a) from Danio rerio (Zebrafish).